Here is a 2207-residue protein sequence, read N- to C-terminus: Genome polyprotein (2207 aa).

The N-myristoyl glycine; by host moiety is linked to residue Gly2. Residues 2 to 1518 (GAQVSSQKVG…NINRAMTILQ (1517 aa)) are Cytoplasmic-facing. Residues 579-599 (GLGDLIEGVVEGVTRNALTPL) are amphipathic alpha-helix. Positions 597–613 (TPLTPANNLPDTQSSGP) are enriched in polar residues. 2 disordered regions span residues 597–620 (TPLT…KETP) and 628–647 (GATN…VIQK). Active-site for protease 2A activity residues include His899 and Asp917. Zn(2+) contacts are provided by Cys934 and Cys936. Cys988 serves as the catalytic For protease 2A activity. Positions 994 and 996 each coordinate Zn(2+). Residues 1126–1198 (GDSWLKKFTE…HQSCPSQEHQ (73 aa)) are membrane-binding. The oligomerization stretch occupies residues 1126–1264 (GDSWLKKFTE…SPGTGKSVAT (139 aa)). The tract at residues 1147–1151 (SNKIS) is RNA-binding. The SF3 helicase domain maps to 1230–1386 (EHTINNYVQF…SEYSRDGKLN (157 aa)). 1254-1261 (GSPGTGKS) is a binding site for ATP. Positions 1394, 1397, 1406, and 1411 each coordinate Zn(2+). A C4-type zinc finger spans residues 1394–1411 (CKNCHHPANFKRCCPLVC). The interval 1438–1445 (ERNRRSSI) is RNA-binding. Residues 1449-1454 (MEALFQ) are oligomerization. The stretch at 1519–1534 (AVTTFAAVAGVVYVMY) is an intramembrane region. At 1535–2207 (KLFAGHQGAY…TLYRRWLDSF (673 aa)) the chain is on the cytoplasmic side. At Tyr1544 the chain carries O-(5'-phospho-RNA)-tyrosine. The Peptidase C3 domain maps to 1564–1742 (GPGFDYAVAM…FAAALKRSYF (179 aa)). Active-site for protease 3C activity residues include His1603, Glu1634, and Cys1710. The 116-residue stretch at 1973 to 2088 (EKLFAFDYTG…SYPHEVDASL (116 aa)) folds into the RdRp catalytic domain. Positions 1979 and 2074 each coordinate Mg(2+).

It belongs to the picornaviruses polyprotein family. Interacts with capsid protein VP1 and capsid protein VP3 to form heterotrimeric protomers. In terms of assembly, interacts with capsid protein VP0, and capsid protein VP3 to form heterotrimeric protomers. Interacts with human PVR. Five protomers subsequently associate to form pentamers which serve as building blocks for the capsid. Interacts with capsid protein VP2, capsid protein VP3 and capsid protein VP4 following cleavage of capsid protein VP0. As to quaternary structure, interacts with capsid protein VP1 and capsid protein VP3 in the mature capsid. Interacts with capsid protein VP0 and capsid protein VP1 to form heterotrimeric protomers. Five protomers subsequently associate to form pentamers which serve as building blocks for the capsid. Interacts with capsid protein VP4 in the mature capsid. Interacts with protein 2C; this interaction may be important for virion morphogenesis. In terms of assembly, interacts with capsid protein VP1 and capsid protein VP3. As to quaternary structure, homodimer. Homohexamer; forms a hexameric ring structure with 6-fold symmetry characteristic of AAA+ ATPases. Interacts (via N-terminus) with host RTN3 (via reticulon domain); this interaction is important for viral replication. Interacts with capsid protein VP3; this interaction may be important for virion morphogenesis. In terms of assembly, interacts with protein 3CD. As to quaternary structure, homodimer. Interacts with host GBF1. Interacts (via GOLD domain) with host ACBD3 (via GOLD domain); this interaction allows the formation of a viral protein 3A/ACBD3 heterotetramer with a 2:2 stoichiometry, which will stimulate the recruitment of host PI4KB in order to synthesize PI4P at the viral RNA replication sites. Interacts with RNA-directed RNA polymerase. In terms of assembly, interacts with protein 3AB and with RNA-directed RNA polymerase. As to quaternary structure, interacts with Viral protein genome-linked and with protein 3CD. Mg(2+) is required as a cofactor. Specific enzymatic cleavages in vivo by the viral proteases yield processing intermediates and the mature proteins. In terms of processing, myristoylation is required for the formation of pentamers during virus assembly. Further assembly of 12 pentamers and a molecule of genomic RNA generates the provirion. Post-translationally, during virion maturation, immature virions are rendered infectious following cleavage of VP0 into VP4 and VP2. This maturation seems to be an autocatalytic event triggered by the presence of RNA in the capsid and it is followed by a conformational change infectious virion. Myristoylation is required during RNA encapsidation and formation of the mature virus particle. In terms of processing, VPg is uridylylated by the polymerase into VPg-pUpU. This acts as a nucleotide-peptide primer for the genomic RNA replication.

The protein localises to the virion. Its subcellular location is the host cytoplasm. The protein resides in the host cytoplasmic vesicle membrane. It is found in the host nucleus. It catalyses the reaction a ribonucleoside 5'-triphosphate + H2O = a ribonucleoside 5'-diphosphate + phosphate + H(+). The catalysed reaction is Selective cleavage of Tyr-|-Gly bond in the picornavirus polyprotein.. The enzyme catalyses RNA(n) + a ribonucleoside 5'-triphosphate = RNA(n+1) + diphosphate. It carries out the reaction Selective cleavage of Gln-|-Gly bond in the poliovirus polyprotein. In other picornavirus reactions Glu may be substituted for Gln, and Ser or Thr for Gly.. Its activity is regulated as follows. Replication or transcription is subject to high level of random mutations by the nucleotide analog ribavirin. Its function is as follows. Forms an icosahedral capsid of pseudo T=3 symmetry with capsid proteins VP2 and VP3. The capsid is 300 Angstroms in diameter, composed of 60 copies of each capsid protein and enclosing the viral positive strand RNA genome. Capsid protein VP1 mainly forms the vertices of the capsid. Capsid protein VP1 interacts with host cell receptor PVR to provide virion attachment to target host cells. This attachment induces virion internalization predominantly through clathrin- and caveolin-independent endocytosis in Hela cells and through caveolin-mediated endocytosis in brain microvascular endothelial cells. Tyrosine kinases are probably involved in the entry process. Virus binding to PVR induces increased junctional permeability and rearrangement of junctional proteins. Modulation of endothelial tight junctions, as well as cytolytic infection of endothelial cells themselves, may result in loss of endothelial integrity which may help the virus to reach the CNS. After binding to its receptor, the capsid undergoes conformational changes. Capsid protein VP1 N-terminus (that contains an amphipathic alpha-helix) and capsid protein VP4 are externalized. Together, they shape a pore in the host membrane through which viral genome is translocated to host cell cytoplasm. In terms of biological role, forms an icosahedral capsid of pseudo T=3 symmetry with capsid proteins VP2 and VP3. The capsid is 300 Angstroms in diameter, composed of 60 copies of each capsid protein and enclosing the viral positive strand RNA genome. Lies on the inner surface of the capsid shell. After binding to the host receptor, the capsid undergoes conformational changes. Capsid protein VP4 is released, Capsid protein VP1 N-terminus is externalized, and together, they shape a pore in the host membrane through which the viral genome is translocated into the host cell cytoplasm. Functionally, component of immature procapsids, which is cleaved into capsid proteins VP4 and VP2 after maturation. Allows the capsid to remain inactive before the maturation step. Its function is as follows. Cysteine protease that cleaves viral polyprotein and specific host proteins. It is responsible for the autocatalytic cleavage between the P1 and P2 regions, which is the first cleavage occurring in the polyprotein. Also cleaves the host translation initiation factor EIF4G1, in order to shut down the capped cellular mRNA translation. Inhibits the host nucleus-cytoplasm protein and RNA trafficking by cleaving host members of the nuclear pores including NUP98, NUP62 and NUP153. Counteracts stress granule formation probably by antagonizing its assembly or promoting its dissassembly. Cleaves and inhibits host IFIH1/MDA5, thereby inhibiting the type-I IFN production and the establishment of the antiviral state. Cleaves and inhibits host MAVS, thereby inhibiting the type-I IFN production and the establishment of the antiviral state. In terms of biological role, plays an essential role in the virus replication cycle by acting as a viroporin. Creates a pore in the host endoplasmic reticulum and as a consequence releases Ca2+ in the cytoplasm of infected cell. In turn, high levels of cytoplasmic calcium may trigger membrane trafficking and transport of viral ER-associated proteins to viroplasms, sites of viral genome replication. Induces and associates with structural rearrangements of intracellular membranes. Displays RNA-binding, nucleotide binding and NTPase activities. May play a role in virion morphogenesis and viral RNA encapsidation by interacting with the capsid protein VP3. Functionally, localizes the viral replication complex to the surface of membranous vesicles. Together with protein 3CD binds the Cis-Active RNA Element (CRE) which is involved in RNA synthesis initiation. Acts as a cofactor to stimulate the activity of 3D polymerase, maybe through a nucleid acid chaperone activity. Its function is as follows. Localizes the viral replication complex to the surface of membranous vesicles. It inhibits host cell endoplasmic reticulum-to-Golgi apparatus transport and causes the disassembly of the Golgi complex, possibly through GBF1 interaction. This would result in depletion of MHC, trail receptors and IFN receptors at the host cell surface. Plays an essential role in viral RNA replication by recruiting ACBD3 and PI4KB at the viral replication sites, thereby allowing the formation of the rearranged membranous structures where viral replication takes place. In terms of biological role, acts as a primer for viral RNA replication and remains covalently bound to viral genomic RNA. VPg is uridylylated prior to priming replication into VPg-pUpU. The oriI viral genomic sequence may act as a template for this. The VPg-pUpU is then used as primer on the genomic RNA poly(A) by the RNA-dependent RNA polymerase to replicate the viral genome. During genome replication, the VPg-RNA linkage is removed by the host TDP2, thereby accelerating replication. During the late stage of the replication cycle, host TDP2 is excluded from sites of viral RNA synthesis and encapsidation, allowing for the generation of progeny virions. Involved in the viral replication complex and viral polypeptide maturation. It exhibits protease activity with a specificity and catalytic efficiency that is different from protease 3C. Protein 3CD lacks polymerase activity. Protein 3CD binds to the 5'UTR of the viral genome. Functionally, major viral protease that mediates proteolytic processing of the polyprotein. Cleaves host EIF5B, contributing to host translation shutoff. Also cleaves host PABPC1, contributing to host translation shutoff. Cleaves host RIGI and thus contributes to the inhibition of type I interferon production. Cleaves host NLRP1, triggers host N-glycine-mediated degradation of the autoinhibitory NLRP1 N-terminal fragment. Inhibits the integrated stress response (ISR) in the infected cell by cleaving host G3BP1. Stress granule formation is thus inhibited, which allows protein synthesis and viral replication. Its function is as follows. Replicates the viral genomic RNA on the surface of intracellular membranes. May form linear arrays of subunits that propagate along a strong head-to-tail interaction called interface-I. Covalently attaches UMP to a tyrosine of VPg, which is used to prime RNA synthesis. The positive stranded RNA genome is first replicated at virus induced membranous vesicles, creating a dsRNA genomic replication form. This dsRNA is then used as template to synthesize positive stranded RNA genomes. ss(+)RNA genomes are either translated, replicated or encapsidated. This chain is Genome polyprotein, found in Homo sapiens (Human).